The following is a 354-amino-acid chain: Fructose-1,6-bisphosphatase class 1 (354 aa).

Mg(2+) contacts are provided by E112, D134, L136, and D137. Substrate-binding positions include D137–S140, N229, Y257, and K287. E293 is a binding site for Mg(2+).

The protein belongs to the FBPase class 1 family. As to quaternary structure, homotetramer. It depends on Mg(2+) as a cofactor.

The protein resides in the cytoplasm. The catalysed reaction is beta-D-fructose 1,6-bisphosphate + H2O = beta-D-fructose 6-phosphate + phosphate. It participates in carbohydrate biosynthesis; Calvin cycle. The polypeptide is Fructose-1,6-bisphosphatase class 1 (Trichodesmium erythraeum (strain IMS101)).